The chain runs to 875 residues: Transcription factor tenR (875 aa).

Residues 16–44 (CSECRRRKIRCDRGFPCGPCRKSLPALSC) constitute a DNA-binding region (zn(2)-C6 fungal-type). Disordered stretches follow at residues 54-73 (AASA…PKVN), 136-172 (DHEK…GVNP), and 620-642 (PHED…TGSR). Composition is skewed to polar residues over residues 153 to 168 (PGST…SHSA) and 627 to 642 (SIQS…TGSR).

The protein resides in the nucleus. Functionally, transcription factor that positively regulates the expression of the genes that mediate the biosynthesis of tenellin-type 2-pyridones, iron-chelating compounds involved in iron stress tolerance, competition with the natural competitor fungus Metarhizium robertsii and insect hosts infection. The sequence is that of Transcription factor tenR from Beauveria bassiana (strain ARSEF 2860) (White muscardine disease fungus).